We begin with the raw amino-acid sequence, 452 residues long: Phosphoglucosamine mutase (452 aa).

The active-site Phosphoserine intermediate is serine 104. 4 residues coordinate Mg(2+): serine 104, aspartate 245, aspartate 247, and aspartate 249. A Phosphoserine modification is found at serine 104.

Belongs to the phosphohexose mutase family. It depends on Mg(2+) as a cofactor. Activated by phosphorylation.

The enzyme catalyses alpha-D-glucosamine 1-phosphate = D-glucosamine 6-phosphate. Its function is as follows. Catalyzes the conversion of glucosamine-6-phosphate to glucosamine-1-phosphate. The chain is Phosphoglucosamine mutase from Gluconacetobacter diazotrophicus (strain ATCC 49037 / DSM 5601 / CCUG 37298 / CIP 103539 / LMG 7603 / PAl5).